The following is a 557-amino-acid chain: Aerobic glycerol-3-phosphate dehydrogenase (557 aa).

21–49 is an FAD binding site; sequence DVVIIGGGITGAGIALDASQRGMKVALVE.

Belongs to the FAD-dependent glycerol-3-phosphate dehydrogenase family. It depends on FAD as a cofactor.

It localises to the cytoplasm. It catalyses the reaction a quinone + sn-glycerol 3-phosphate = dihydroxyacetone phosphate + a quinol. Its pathway is polyol metabolism; glycerol degradation via glycerol kinase pathway; glycerone phosphate from sn-glycerol 3-phosphate (aerobic route): step 1/1. The chain is Aerobic glycerol-3-phosphate dehydrogenase (glpD) from Staphylococcus haemolyticus (strain JCSC1435).